The primary structure comprises 278 residues: MSSASFTTKALSVLAALTAASAPLVAASPAHALANARNVTGSSTTSDSIVRLHIGNTACTGTMITPTWAITARHCIPEDGIAGAAIGSSTLSQFQQVSQAILHPTADLALVELPNQASSNTVDLYGAHVQPGENGQAAGWGGYSAFGQNVAQQADVQIQRRVVNVPSPDRTAVLLEGTVSNGRLVPGDSGGPLYINGQLAGVLSMSTDVENDALDGTVGWYIPVAEHAEWIAYYTGKHIAPIAGAPAELVDATANPTFIPAPQPFTGSSIGGWALGSS.

The signal sequence occupies residues 1 to 32; the sequence is MSSASFTTKALSVLAALTAASAPLVAASPAHA. One can recognise a Peptidase S1 domain in the interval 33–236; that stretch reads LANARNVTGS…HAEWIAYYTG (204 aa). An intrachain disulfide couples cysteine 59 to cysteine 75. Active-site charge relay system residues include histidine 74, aspartate 123, and serine 189.

It belongs to the peptidase S1 family.

Its subcellular location is the secreted. This is an uncharacterized protein from Corynebacterium glutamicum (strain R).